Consider the following 173-residue polypeptide: MKLTSKGRYAVTAMLDVALHSQKSPVPLADISERQGISLSYLEQLFSKLRKAGLVASVRGPGGGYRLGAEASDIAVGTVIAAVDESVDATKCHGRADCQGGTRCLTHTLWRDLSSRISSFLNDITLGELMKDNEVLEISDRQDIDLAVNNGFAHKNTSTTTISAAPHGVNARS.

The HTH rrf2-type domain maps to 2–131 (KLTSKGRYAV…NDITLGELMK (130 aa)). Residues 28 to 51 (LADISERQGISLSYLEQLFSKLRK) constitute a DNA-binding region (H-T-H motif). Residues Cys92, Cys98, and Cys104 each contribute to the [2Fe-2S] cluster site.

[2Fe-2S] cluster is required as a cofactor.

In terms of biological role, regulates the transcription of several operons and genes involved in the biogenesis of Fe-S clusters and Fe-S-containing proteins. The protein is HTH-type transcriptional regulator IscR of Vibrio atlanticus (strain LGP32) (Vibrio splendidus (strain Mel32)).